The sequence spans 662 residues: DNA topoisomerase 4 subunit B (662 aa).

ATP is bound by residues Tyr20, Asn60, Asp87, 129 to 135 (GLHGVGI), and Lys359. The Toprim domain occupies 439–553 (TELFIVEGDS…EGHLYLAKPP (115 aa)). Residues Glu445, Asp518, and Asp520 each coordinate Mg(2+).

Belongs to the type II topoisomerase family. ParE type 1 subfamily. Heterotetramer composed of ParC and ParE. Requires Mg(2+) as cofactor. Mn(2+) serves as cofactor. Ca(2+) is required as a cofactor.

It catalyses the reaction ATP-dependent breakage, passage and rejoining of double-stranded DNA.. Functionally, topoisomerase IV is essential for chromosome segregation. It relaxes supercoiled DNA. Performs the decatenation events required during the replication of a circular DNA molecule. In Rickettsia conorii (strain ATCC VR-613 / Malish 7), this protein is DNA topoisomerase 4 subunit B.